The chain runs to 306 residues: Cathepsin Z (306 aa).

The first 20 residues, 1-20 (MLAILFNFFLLTYFTNITLG), serve as a signal peptide directing secretion. Residues 21–65 (KVGKSIDLDTRNGYNVHGCYKQTGKIYAHKTYPRQYEAENYNFDD) constitute a propeptide, activation peptide. Cystine bridges form between C39-C96, C93-C136, C130-C168, C158-C174, and C177-C182. The active site involves C96. A glycan (N-linked (GlcNAc...) asparagine) is linked at N187. Residues C217 and C299 are joined by a disulfide bond. Active-site residues include H243 and N265. N-linked (GlcNAc...) asparagine glycosylation is present at N286.

The protein belongs to the peptidase C1 family.

It is found in the cytoplasmic vesicle. The protein localises to the secretory vesicle. Its subcellular location is the secreted. It carries out the reaction Release of C-terminal amino acid residues with broad specificity, but lacks action on C-terminal proline. Shows weak endopeptidase activity.. The disulfide bridge formed between Cys-39 in the propeptide and the active site residue Cys-96 may prevent activation of the zymogen through formation of a reversible covalent bond with the active site residue. Functionally, exhibits carboxy-monopeptidase as well as carboxy-dipeptidase activity. Plays an essential role in molting, a process during larval stages in which a new cuticle is formed and the old cuticle is shed. Required for the degradation and shedding of the old cuticle. This Onchocerca volvulus protein is Cathepsin Z.